Consider the following 513-residue polypeptide: GMP synthase [glutamine-hydrolyzing] (513 aa).

Residues 9–198 enclose the Glutamine amidotransferase type-1 domain; the sequence is LILVLDFGSQ…VRRVCDCRGQ (190 aa). The active-site Nucleophile is the Cys86. Active-site residues include His172 and Glu174. Positions 199-388 constitute a GMPS ATP-PPase domain; that stretch reads WTMENFIEIE…LGIPEHLVWR (190 aa). Residue 226-232 coordinates ATP; sequence SGGVDSS.

As to quaternary structure, homodimer.

It catalyses the reaction XMP + L-glutamine + ATP + H2O = GMP + L-glutamate + AMP + diphosphate + 2 H(+). It participates in purine metabolism; GMP biosynthesis; GMP from XMP (L-Gln route): step 1/1. In terms of biological role, catalyzes the synthesis of GMP from XMP. In Staphylococcus aureus (strain USA300), this protein is GMP synthase [glutamine-hydrolyzing].